The following is a 663-amino-acid chain: Polyunsaturated fatty acid lipoxygenase ALOX15 (663 aa).

Positions 2 to 115 (GLYRVRVSTG…ILSLPEGTGR (114 aa)) constitute a PLAT domain. Positions 116-663 (TVVDDPQGLF…PSLVENSVAI (548 aa)) constitute a Lipoxygenase domain. Fe cation is bound by residues H361, H366, H541, H545, and I663.

This sequence belongs to the lipoxygenase family. Interacts with PEBP1; in response to IL13/interleukin-13, prevents the interaction of PEBP1 with RAF1 to activate the ERK signaling cascade. Fe cation serves as cofactor. Detected in tracheal epithelium.

The protein localises to the cytoplasm. It localises to the cytosol. Its subcellular location is the cell membrane. The protein resides in the lipid droplet. It carries out the reaction (5Z,8Z,11Z,14Z)-eicosatetraenoate + O2 = (12S)-hydroperoxy-(5Z,8Z,10E,14Z)-eicosatetraenoate. The catalysed reaction is (5Z,8Z,11Z,14Z)-eicosatetraenoate + O2 = (15S)-hydroperoxy-(5Z,8Z,11Z,13E)-eicosatetraenoate. It catalyses the reaction (9Z,12Z)-octadecadienoate + O2 = (13S)-hydroperoxy-(9Z,11E)-octadecadienoate. The enzyme catalyses (5Z,8Z,11Z,14Z)-eicosatetraenoate + 2 O2 = (14R,15S)-dihydroperoxy-(5Z,8Z,10E,12E)-eicosatetraenoate. It carries out the reaction (5Z,8Z,11Z,14Z)-eicosatetraenoate + 2 O2 = (8S,15S)-dihydroperoxy-(5Z,9E,11Z,13E)-eicosatetraenoate. The catalysed reaction is (14S,15R)-epoxy-(5Z,8Z,11Z)-eicosatrienoate + O2 = (8S)-hydroperoxy-(14S,15R)-epoxy-(5Z,9E,11Z)-eicosatrienoate. It catalyses the reaction (14S,15R)-epoxy-(5Z,8Z,11Z)-eicosatrienoate + O2 = (12S)-hydroperoxy-(14S,15R)-epoxy-(5Z,8Z,10E)-eicosatrienoate. The enzyme catalyses (14R,15S)-epoxy-(5Z,8Z,11Z)-eicosatrienoate + O2 = (5S)-hydroperoxy-(14R,15S)-epoxy-(6E,8Z,11Z)-eicosatrienoate. It carries out the reaction (14R,15S)-epoxy-(5Z,8Z,11Z)-eicosatrienoate + O2 = (12S)-hydroperoxy-(14R,15S)-epoxy-(5Z,8Z,10E)-eicosatrienoate. The catalysed reaction is (15R)-hydroperoxy-(5Z,8Z,11Z,13E)-eicosatetraenoate = 15-oxo-(5Z,8Z,11Z,13E)-eicosatetraenoate + H2O. It catalyses the reaction (15S)-hydroperoxy-(5Z,8Z,11Z,13E)-eicosatetraenoate = (14S,15S)-epoxy-(5Z,8Z,10E,12E)-eicosatetraenoate + H2O. The enzyme catalyses (12S)-hydroperoxy-(5Z,8Z,10E,14Z)-eicosatetraenoate = (8S)-hydroxy-(11S,12S)-epoxy-(5Z,9E,14Z)-eicosatrienoate. It carries out the reaction (4Z,7Z,10Z,13Z,16Z)-docosapentaenoate + O2 = 14-hydroperoxy-(4Z,7Z,10Z,12E,16Z)-docosapentaenoate. The catalysed reaction is (7Z,10Z,13Z,16Z,19Z)-docosapentaenoate + O2 = 14-hydroperoxy-(7Z,10Z,12E,16Z,19Z)-docosapentaenoate. It catalyses the reaction (4Z,7Z,10Z,13Z,16Z,19Z)-docosahexaenoate + O2 = (14S)-hydroperoxy-(4Z,7Z,10Z,12E,16Z,19Z)-docosahexaenoate. The enzyme catalyses (4Z,7Z,10Z,13Z,16Z,19Z)-docosahexaenoate + O2 = (17S)-hydroperoxy-(4Z,7Z,10Z,13Z,15E,19Z)-docosahexaenoate. It carries out the reaction (7S)-hydroperoxy-(4Z,8E,10Z,13Z,16Z,19Z)-docosahexaenoate + O2 = (7S,14S)-dihydroperoxy-(4Z,8E,10Z,12E,16Z,19Z)-docosahexaenoate. The catalysed reaction is (7S)-hydroperoxy-(4Z,8E,10Z,13Z,16Z,19Z)-docosahexaenoate + O2 = (7S,17S)-dihydroperoxy-(4Z,8E,10Z,13Z,15E,19Z)-docosahexaenoate. It catalyses the reaction (4Z,7Z,10Z,13Z,16Z,19Z)-docosahexaenoate + O2 = (11S)-hydroperoxy-(4Z,7Z,9E,13Z,16Z,19Z)-docosahexaenoate. The enzyme catalyses N-(5Z,8Z,11Z,14Z)-eicosatetraenoyl-taurine + O2 = N-(12S)-hydroperoxy-(5Z,8Z,10E,14Z)-eicosatetraenoyl-taurine. It carries out the reaction N-(5Z,8Z,11Z,14Z)-eicosatetraenoyl-gamma-aminobutanoate + O2 = N-(12S)-hydroperoxy-(5Z,8Z,10E,14Z)-eicosatetraenoyl-gamma-aminobutanoate. The catalysed reaction is N-(5Z,8Z,11Z,14Z)-eicosatetraenoyl-glycine + O2 = N-(12S)-hydroperoxy-(5Z,8Z,10E,14Z)-eicosatetraenoyl-glycine. It catalyses the reaction N-(5Z,8Z,11Z,14Z)-eicosatetraenoyl-L-alanine + O2 = N-(12S)-hydroperoxy-(5Z,8Z,10E,14Z)-eicosatetraenoyl-alanine. The enzyme catalyses N-(5Z,8Z,11Z,14Z)-eicosatetraenoyl-taurine + O2 = N-(15S)-hydroperoxy-(5Z,8Z,11Z,13E)-eicosatetraenoyl-taurine. It carries out the reaction N-(5Z,8Z,11Z,14Z)-eicosatetraenoyl-gamma-aminobutanoate + O2 = N-(15S)-hydroperoxy-(5Z,8Z,11Z,13E)-eicosatetraenoyl-gamma-aminobutanoate. The catalysed reaction is N-(5Z,8Z,11Z,14Z)-eicosatetraenoyl-glycine + O2 = N-(15S)-hydroperoxy-(5Z,8Z,11Z,13E)-eicosatetraenoyl-glycine. It catalyses the reaction N-(5Z,8Z,11Z,14Z)-eicosatetraenoyl-L-alanine + O2 = N-(15S)-hydroperoxy-(5Z,8Z,11Z,13E)-eicosatetraenoyl-alanine. It participates in lipid metabolism; hydroperoxy eicosatetraenoic acid biosynthesis. Non-heme iron-containing dioxygenase that catalyzes the stereo-specific peroxidation of free and esterified polyunsaturated fatty acids generating a spectrum of bioactive lipid mediators. It inserts peroxyl groups at C12 or C15 of arachidonate ((5Z,8Z,11Z,14Z)-eicosatetraenoate) producing both 12-hydroperoxyeicosatetraenoate/12-HPETE and 15-hydroperoxyeicosatetraenoate/15-HPETE. It may then act on 12-HPETE to produce hepoxilins, which may show pro-inflammatory properties. Can also peroxidize linoleate ((9Z,12Z)-octadecadienoate) to 13-hydroperoxyoctadecadienoate. May participate in the sequential oxidations of DHA ((4Z,7Z,10Z,13Z,16Z,19Z)-docosahexaenoate) to generate specialized pro-resolving mediators (SPMs)like resolvin D5 ((7S,17S)-diHPDHA) and (7S,14S)-diHPDHA, that actively down-regulate the immune response and have anti-aggregation properties with platelets. Can convert epoxy fatty acids to hydroperoxy-epoxides derivatives followed by an intramolecular nucleophilic substitution leading to the formation of monocyclic endoperoxides. Plays an important role during the maintenance of self-tolerance by peroxidizing membrane-bound phosphatidylethanolamine which can then signal the sorting process for clearance of apoptotic cells during inflammation and prevent an autoimmune response. In addition to its role in the immune and inflammatory responses, this enzyme may play a role in epithelial wound healing in the cornea through production of lipoxin A4 (LXA(4)) and docosahexaenoic acid-derived neuroprotectin D1 (NPD1; 10R,17S-HDHA), both lipid autacoids exhibit anti-inflammatory and neuroprotective properties. Furthermore, it may regulate actin polymerization which is crucial for several biological processes such as the phagocytosis of apoptotic cells. It is also implicated in the generation of endogenous ligands for peroxisome proliferator activated receptor (PPAR-gamma), hence modulating macrophage development and function. It may also exert a negative effect on skeletal development by regulating bone mass through this pathway. As well as participates in ER stress and downstream inflammation in adipocytes, pancreatic islets, and liver. Finally, it is also involved in the cellular response to IL13/interleukin-13. This chain is Polyunsaturated fatty acid lipoxygenase ALOX15, found in Bos taurus (Bovine).